Reading from the N-terminus, the 221-residue chain is Dynein light chain Tctex-type 4 (221 aa).

Disordered stretches follow at residues 1 to 52 and 65 to 87; these read MASR…SRRG and NSLVGPGAGPGGQRPSLGPVPPL. Positions 10-21 are enriched in basic and acidic residues; that stretch reads RQEEENAKDSGR. S66 carries the phosphoserine modification.

This sequence belongs to the dynein light chain Tctex-type family. As to quaternary structure, interacts with ENG/endoglin, TGFBR2 and TGFBR3. Interacts with PPP1CC. As to expression, ubiquitously expressed. Expressed in testis (at protein level).

The protein localises to the cell projection. Its subcellular location is the cilium. The protein resides in the flagellum. It is found in the cytoplasmic vesicle. It localises to the secretory vesicle. The protein localises to the acrosome. Its subcellular location is the cytoplasm. The protein resides in the cytoskeleton. It is found in the cilium axoneme. It localises to the nucleus. The protein localises to the microtubule organizing center. The chain is Dynein light chain Tctex-type 4 from Homo sapiens (Human).